Reading from the N-terminus, the 191-residue chain is Prostaglandin-H2 D-isomerase (191 aa).

The first 24 residues, Met-1–Ala-24, serve as a signal peptide directing secretion. Residue Gln-25 is modified to Pyrrolidone carboxylic acid. Asn-51 is a glycosylation site (N-linked (GlcNAc...) asparagine). Cys-65 (nucleophile) is an active-site residue. A glycan (N-linked (GlcNAc...) asparagine) is linked at Asn-78. Residues Cys-89 and Cys-186 are joined by a disulfide bond.

It belongs to the calycin superfamily. Lipocalin family. Monomer.

It is found in the rough endoplasmic reticulum. Its subcellular location is the nucleus membrane. It localises to the golgi apparatus. The protein resides in the cytoplasm. The protein localises to the perinuclear region. It is found in the secreted. The enzyme catalyses prostaglandin H2 = prostaglandin D2. Catalyzes the conversion of PGH2 to PGD2, a prostaglandin involved in smooth muscle contraction/relaxation and a potent inhibitor of platelet aggregation. Involved in a variety of CNS functions, such as sedation, NREM sleep and PGE2-induced allodynia, and may have an anti-apoptotic role in oligodendrocytes. Binds small non-substrate lipophilic molecules, including biliverdin, bilirubin, retinal, retinoic acid and thyroid hormone, and may act as a scavenger for harmful hydrophobic molecules and as a secretory retinoid and thyroid hormone transporter. Possibly involved in development and maintenance of the blood-brain, blood-retina, blood-aqueous humor and blood-testis barrier. It is likely to play important roles in both maturation and maintenance of the central nervous system and male reproductive system. Involved in PLA2G3-dependent maturation of mast cells. PLA2G3 is secreted by immature mast cells and acts on nearby fibroblasts upstream to PTDGS to synthesize PGD2, which in turn promotes mast cell maturation and degranulation via PTGDR. The protein is Prostaglandin-H2 D-isomerase (PTGDS) of Ursus arctos (Brown bear).